A 470-amino-acid polypeptide reads, in one-letter code: Carboxypeptidase Q (470 aa).

The first 18 residues, 1 to 18 (MRSLFFLFIVHLLALGSG), serve as a signal peptide directing secretion. Positions 19–42 (KAVFKNGVSQRTFREIKEEIANYE) are excised as a propeptide. Residue asparagine 59 is glycosylated (N-linked (GlcNAc...) asparagine). Zn(2+) is bound by residues histidine 288 and aspartate 300. Glutamate 334 serves as the catalytic Nucleophile. Glutamate 335 lines the Zn(2+) pocket. The N-linked (GlcNAc...) asparagine glycan is linked to asparagine 351. Aspartate 362 provides a ligand contact to Zn(2+). Asparagine 394 is a glycosylation site (N-linked (GlcNAc...) asparagine). Histidine 432 serves as a coordination point for Zn(2+).

This sequence belongs to the peptidase M28 family. Homodimer. The monomeric form is inactive while the homodimer is active. N-glycosylated. The secreted form is modified by hybrid or complex type oligosaccharide chains.

Its subcellular location is the endoplasmic reticulum. The protein resides in the golgi apparatus. The protein localises to the lysosome. It is found in the secreted. Functionally, carboxypeptidase that may play an important role in the hydrolysis of circulating peptides. Catalyzes the hydrolysis of dipeptides with unsubstituted terminals into amino acids. May play a role in the liberation of thyroxine hormone from its thyroglobulin (Tg) precursor. In Mus musculus (Mouse), this protein is Carboxypeptidase Q (Cpq).